A 338-amino-acid chain; its full sequence is Glutamyl-tRNA reductase (338 aa).

Substrate is bound by residues 50-53, Ser102, 107-109, and Gln113; these read TCHR and ETE. Cys51 acts as the Nucleophile in catalysis. Residue 181–186 participates in NADP(+) binding; it reads GYSDIN.

This sequence belongs to the glutamyl-tRNA reductase family. Homodimer.

The enzyme catalyses (S)-4-amino-5-oxopentanoate + tRNA(Glu) + NADP(+) = L-glutamyl-tRNA(Glu) + NADPH + H(+). It functions in the pathway porphyrin-containing compound metabolism; protoporphyrin-IX biosynthesis; 5-aminolevulinate from L-glutamyl-tRNA(Glu): step 1/2. Functionally, catalyzes the NADPH-dependent reduction of glutamyl-tRNA(Glu) to glutamate 1-semialdehyde (GSA). This chain is Glutamyl-tRNA reductase, found in Chlamydia caviae (strain ATCC VR-813 / DSM 19441 / 03DC25 / GPIC) (Chlamydophila caviae).